A 241-amino-acid chain; its full sequence is Small ribosomal subunit protein uS2 (241 aa).

This sequence belongs to the universal ribosomal protein uS2 family.

The sequence is that of Small ribosomal subunit protein uS2 from Klebsiella pneumoniae (strain 342).